Consider the following 507-residue polypeptide: ATP synthase subunit alpha, chloroplastic (507 aa).

Residue 170 to 177 participates in ATP binding; that stretch reads GDRQTGKT.

Belongs to the ATPase alpha/beta chains family. In terms of assembly, F-type ATPases have 2 components, CF(1) - the catalytic core - and CF(0) - the membrane proton channel. CF(1) has five subunits: alpha(3), beta(3), gamma(1), delta(1), epsilon(1). CF(0) has four main subunits: a, b, b' and c.

Its subcellular location is the plastid. It localises to the chloroplast thylakoid membrane. It catalyses the reaction ATP + H2O + 4 H(+)(in) = ADP + phosphate + 5 H(+)(out). Its function is as follows. Produces ATP from ADP in the presence of a proton gradient across the membrane. The alpha chain is a regulatory subunit. This Amborella trichopoda protein is ATP synthase subunit alpha, chloroplastic.